The sequence spans 231 residues: Large ribosomal subunit protein uL1 (231 aa).

Belongs to the universal ribosomal protein uL1 family. In terms of assembly, part of the 50S ribosomal subunit.

Its function is as follows. Binds directly to 23S rRNA. The L1 stalk is quite mobile in the ribosome, and is involved in E site tRNA release. Functionally, protein L1 is also a translational repressor protein, it controls the translation of the L11 operon by binding to its mRNA. This chain is Large ribosomal subunit protein uL1, found in Neisseria gonorrhoeae (strain ATCC 700825 / FA 1090).